Consider the following 116-residue polypeptide: Anti-sigma F factor antagonist (116 aa).

The STAS domain occupies 3-113 (LAIDLEVKQD…ADEQFALQAL (111 aa)). Phosphoserine is present on S58.

The protein belongs to the anti-sigma-factor antagonist family. Post-translationally, phosphorylated by SpoIIAB on a serine residue.

Functionally, in the phosphorylated form it could act as an anti-anti-sigma factor that counteracts SpoIIAB and thus releases sigma f from inhibition. The sequence is that of Anti-sigma F factor antagonist (spoIIAA) from Geobacillus stearothermophilus (Bacillus stearothermophilus).